The following is a 720-amino-acid chain: MRVDELRVDERIKSTLKERGIESFYPPQAEALKSGILEGKNALISIPTASGKTLIAEIAMVHRILTQGGKAVYIVPLKALAEEKFQEFQDWEKIGLRVAMATGDYDSKDEWLGKYDIIIATAEKFDSLLRHGSSWIKDVKILVADEIHLIGSRDRGATLEVILAHMLGKAQIIGLSATIGNPEELAEWLNAELIVSDWRPVKLRRGVFYQGFVTWEDGSIDRFSSWEELVYDAIRKKKGALIFVNMRRKAERVALELSKKVKSLLTKPEIRALNELADSLEENPTNEKLAKAIRGGVAFHHAGLGRDERVLVEENFRKGIIKAVVATPTLSAGINTPAFRVIIRDIWRYSDFGMERIPIIEVHQMLGRAGRPKYDEVGEGIIVSTSDDPREVMNHYIFGKPEKLFSQLSNESNLRSQVLALIATFGYSTVEEILKFISNTFYAYQRKDTYSLEEKIRNILYFLLENEFIEISLEDKIRPLSLGIRTAKLYIDPYTAKMFKDKMEEVVKDPNPIGIFHLISLTPDITPFNYSKREFERLEEEYYEFKDRLYFDDPYISGYDPYLERKFFRAFKTALVLLAWINEVPEGEIVEKYSVEPGDIYRIVETAEWLVYSLKEIAKVLGAYEIVDYLETLRVRVKYGIREELIPLMQLPLVGRRRARALYNSGFRSIEDISQARPEELLKIEGIGVKTVEAIFKFLGKNVKISEKPRKSTLDYFLKS.

Residues S23, Q28, and 46 to 53 contribute to the ATP site; that span reads IPTASGKT. One can recognise a Helicase ATP-binding domain in the interval 33 to 197; sequence KSGILEGKNA…WLNAELIVSD (165 aa). The DEAH box signature appears at 145 to 148; that stretch reads DEIH. In terms of domain architecture, Helicase C-terminal spans 229 to 422; the sequence is LVYDAIRKKK…NLRSQVLALI (194 aa).

It belongs to the helicase family. Hel308 subfamily. Monomer. Interacts with PCNA. Mg(2+) is required as a cofactor. It depends on Zn(2+) as a cofactor.

It carries out the reaction Couples ATP hydrolysis with the unwinding of duplex DNA by translocating in the 3'-5' direction.. The enzyme catalyses ATP + H2O = ADP + phosphate + H(+). Functionally, DNA-dependent ATPase and 3'-5' DNA helicase that may be involved in repair of stalled replication forks. Unwinds the lagging strand from forked DNA structures in a 3'-5' direction. PCNA, the DNA polymerase sliding clamp subunit, stimulates the helicase activity, and may alter substrate specificity. Unwinds branched DNA (Holliday junctions) in an ATP-dependent fashion; ss- and dsDNA stimulate ATPase to the greatest extent, although it preferentially binds DNA with a single-stranded region. Processes a RecA-mediated recombination intermediate between gapped circular and homologous linear dsDNA. In Pyrococcus furiosus (strain ATCC 43587 / DSM 3638 / JCM 8422 / Vc1), this protein is ATP-dependent DNA helicase Hel308.